The chain runs to 887 residues: ABC transporter A family member 10 (887 aa).

7 helical membrane-spanning segments follow: residues 38–58 (GIQYIIVLVILHYTIPNVITL), 198–218 (YLYVIYLPLLFLFSLQQLLVT), 245–265 (IIIVQTITNVINILLVMVVLY), 277–297 (VMLFLQFLLYSFSMVAIGIIL), 309–329 (AISSFLLLILVGVSCFYQFYL), 335–355 (SSWLRSILFLFSPCAFGEFLY), and 376–396 (ISFLFLIIDIFLYFTIAWYIT). Positions 443-469 (NNCNNNNTSPSSSSSSQSSPLNKPLLS) are enriched in low complexity. Residues 443-474 (NNCNNNNTSPSSSSSSQSSPLNKPLLSGDSDD) form a disordered region. Positions 481 to 728 (IRLVNLKKTY…FNLGYILTIV (248 aa)) constitute an ABC transporter domain. 519-526 (GQNGSGKT) contributes to the ATP binding site. The span at 774–797 (NNNNNENNSNNSDGSSSSSDSSSS) shows a compositional bias: low complexity. A disordered region spans residues 774-799 (NNNNNENNSNNSDGSSSSSDSSSSKD).

This sequence belongs to the ABC transporter superfamily. ABCA family.

The protein localises to the membrane. This is ABC transporter A family member 10 (abcA10) from Dictyostelium discoideum (Social amoeba).